The sequence spans 432 residues: Glutamate-1-semialdehyde 2,1-aminomutase (432 aa).

The residue at position 270 (K270) is an N6-(pyridoxal phosphate)lysine.

This sequence belongs to the class-III pyridoxal-phosphate-dependent aminotransferase family. HemL subfamily. In terms of assembly, homodimer. Pyridoxal 5'-phosphate is required as a cofactor.

It is found in the cytoplasm. The catalysed reaction is (S)-4-amino-5-oxopentanoate = 5-aminolevulinate. It functions in the pathway porphyrin-containing compound metabolism; protoporphyrin-IX biosynthesis; 5-aminolevulinate from L-glutamyl-tRNA(Glu): step 2/2. The chain is Glutamate-1-semialdehyde 2,1-aminomutase from Acinetobacter baumannii (strain ACICU).